Consider the following 342-residue polypeptide: UDP-xylose transporter 1 (342 aa).

10 consecutive transmembrane segments (helical) span residues methionine 7–isoleucine 27, leucine 36–leucine 56, valine 75–phenylalanine 95, phenylalanine 100–leucine 120, leucine 132–valine 152, serine 154–isoleucine 174, glutamine 184–valine 204, isoleucine 221–phenylalanine 241, valine 250–leucine 270, and isoleucine 280–alanine 300. The segment at glutamine 305–valine 342 is disordered. The span at asparagine 327–valine 342 shows a compositional bias: basic and acidic residues.

It belongs to the TPT transporter family. TPT (TC 2.A.7.9) subfamily. In terms of tissue distribution, ubiquitous.

Its subcellular location is the golgi apparatus membrane. It localises to the endoplasmic reticulum membrane. In terms of biological role, nucleotide-sugar transporter that transports UDP-xylose and UMP in a strict counter-exchange mode. The sequence is that of UDP-xylose transporter 1 from Arabidopsis thaliana (Mouse-ear cress).